Reading from the N-terminus, the 519-residue chain is Pleckstrin homology domain-containing family A member 8 (519 aa).

Positions 1 to 93 (MEGVLYKWTN…WLVALGSAKA (93 aa)) constitute a PH domain. Thr-139 is subject to Phosphothreonine. Phosphoserine is present on Ser-145. Position 153 is a phosphothreonine (Thr-153). Positions 275 to 302 (GEENLESHDKDPAQPGSDSVCSPESPWE) are disordered. Residues 330–473 (IPTEAFLASC…EDFVAALTIK (144 aa)) form a glycolipid transfer protein homology domain region.

Homodimer. Interacts with ARF1; the interaction together with phosphatidylinositol 4-phosphate binding is required for FAPP2 GlcCer transfer ability.

It is found in the golgi apparatus. The protein resides in the trans-Golgi network membrane. Its subcellular location is the membrane. Cargo transport protein that is required for apical transport from the trans-Golgi network (TGN). Transports AQP2 from the trans-Golgi network (TGN) to sites of AQP2 phosphorylation. Mediates the non-vesicular transport of glucosylceramide (GlcCer) from the trans-Golgi network (TGN) to the plasma membrane and plays a pivotal role in the synthesis of complex glycosphingolipids. Binding of both phosphatidylinositol 4-phosphate (PIP) and ARF1 are essential for the GlcCer transfer ability. Also required for primary cilium formation, possibly by being involved in the transport of raft lipids to the apical membrane, and for membrane tubulation. The sequence is that of Pleckstrin homology domain-containing family A member 8 (Plekha8) from Mus musculus (Mouse).